Reading from the N-terminus, the 364-residue chain is D-alanine--D-alanine ligase (364 aa).

Residues 134-347 enclose the ATP-grasp domain; the sequence is RRLACINGLK…YPDLLDELIN (214 aa). 167-222 contacts ATP; the sequence is ASEFGWPLFVKPCSLGSSVGIHKANNMDELNAAVADALRYDEEILVEEFIVGREIE. The Mg(2+) site is built by D300, E314, and N316.

The protein belongs to the D-alanine--D-alanine ligase family. The cofactor is Mg(2+). Mn(2+) serves as cofactor.

Its subcellular location is the cytoplasm. It catalyses the reaction 2 D-alanine + ATP = D-alanyl-D-alanine + ADP + phosphate + H(+). It functions in the pathway cell wall biogenesis; peptidoglycan biosynthesis. In terms of biological role, cell wall formation. In Legionella pneumophila (strain Lens), this protein is D-alanine--D-alanine ligase.